An 88-amino-acid chain; its full sequence is Small ribosomal subunit protein uS17 (88 aa).

It belongs to the universal ribosomal protein uS17 family. In terms of assembly, part of the 30S ribosomal subunit.

In terms of biological role, one of the primary rRNA binding proteins, it binds specifically to the 5'-end of 16S ribosomal RNA. This chain is Small ribosomal subunit protein uS17, found in Maridesulfovibrio salexigens (strain ATCC 14822 / DSM 2638 / NCIMB 8403 / VKM B-1763) (Desulfovibrio salexigens).